Here is a 320-residue protein sequence, read N- to C-terminus: MRSAQVYRWQIPMDAGVVLRDRRLKTRDGLYVCLRDGEREGWGEISPLPGFSQETWEEAQTALLTWVNDWLQGSEGLPEMPSVAFGASCALAELTGVLPEAADYRAAPLCTGDPDDLVLRLADMPGEKIAKVKVGLYEAVRDGMVVNLLLEAIPDLHLRLDANRAWTPLKAQQFAKYVNPDYRARIAFLEEPCKTRDDSRGFARETGIAIAWDESLREADFTFEAEEGVRAVVIKPTLTGSLDKVREQVAAAHALGLTAVISSSIESSLGLTQLARIAAWLTPGTLPGLDTLHLMQAQQIRPWPGSALPCLKREELERLL.

Catalysis depends on lysine 133, which acts as the Proton donor. Mg(2+) contacts are provided by aspartate 161, glutamate 190, and aspartate 213. Catalysis depends on lysine 235, which acts as the Proton acceptor.

The protein belongs to the mandelate racemase/muconate lactonizing enzyme family. MenC type 1 subfamily. A divalent metal cation is required as a cofactor.

It catalyses the reaction (1R,6R)-6-hydroxy-2-succinyl-cyclohexa-2,4-diene-1-carboxylate = 2-succinylbenzoate + H2O. It functions in the pathway quinol/quinone metabolism; 1,4-dihydroxy-2-naphthoate biosynthesis; 1,4-dihydroxy-2-naphthoate from chorismate: step 4/7. It participates in quinol/quinone metabolism; menaquinone biosynthesis. Functionally, converts 2-succinyl-6-hydroxy-2,4-cyclohexadiene-1-carboxylate (SHCHC) to 2-succinylbenzoate (OSB). The chain is o-succinylbenzoate synthase from Salmonella paratyphi C (strain RKS4594).